Here is a 586-residue protein sequence, read N- to C-terminus: CTP synthase 2 (586 aa).

The Glutamine amidotransferase type-1 domain occupies 300–554 (SIALVGKYTK…LAATGNLNAY (255 aa)). Residues cysteine 399, histidine 526, and glutamate 528 each act as for GATase activity in the active site. A disordered region spans residues 563–586 (SSDRYSDASDDSFSEPRIAELEIS). Phosphoserine is present on residues serine 568, serine 571, and serine 574.

The protein belongs to the CTP synthase family.

The catalysed reaction is UTP + L-glutamine + ATP + H2O = CTP + L-glutamate + ADP + phosphate + 2 H(+). It participates in pyrimidine metabolism; CTP biosynthesis via de novo pathway; CTP from UDP: step 2/2. Functionally, catalyzes the ATP-dependent amination of UTP to CTP with either L-glutamine or ammonia as the source of nitrogen. Constitutes the rate-limiting enzyme in the synthesis of cytosine nucleotides. In Homo sapiens (Human), this protein is CTP synthase 2 (CTPS2).